Reading from the N-terminus, the 589-residue chain is Splicing factor U2af large subunit B (589 aa).

The interval 1 to 195 (MMSYEGNGDG…KRRSGFDMAP (195 aa)) is disordered. The segment covering 14-27 (STENHNENYISLES) has biased composition (polar residues). 2 stretches are compositionally biased toward basic and acidic residues: residues 29 to 100 (PFHE…DRQR) and 109 to 145 (RDRS…DREV). Basic residues-rich tracts occupy residues 146–156 (RHRRRSRSRSR) and 164–188 (RSEH…SKRR). RRM domains lie at 255 to 338 (RRVY…RPTD), 375 to 453 (DRIF…RAIQ), and 494 to 580 (QVVT…YPED).

This sequence belongs to the splicing factor SR family. As to quaternary structure, component of the spliceosome. Interacts with SF1 in the nucleus.

It is found in the nucleus. It localises to the nucleus speckle. Functionally, necessary for the splicing of pre-mRNA. The polypeptide is Splicing factor U2af large subunit B (Arabidopsis thaliana (Mouse-ear cress)).